The sequence spans 249 residues: Ribitol 2-dehydrogenase (249 aa).

Residue 20–43 (TGAASGIGLECARTLLGAGAKVVL) participates in NAD(+) binding. The active-site Proton acceptor is Tyr160.

This sequence belongs to the short-chain dehydrogenases/reductases (SDR) family. Homotetramer.

The catalysed reaction is ribitol + NAD(+) = D-ribulose + NADH + H(+). The chain is Ribitol 2-dehydrogenase (rbtD) from Klebsiella aerogenes (Enterobacter aerogenes).